The chain runs to 564 residues: Probable diguanylate cyclase DgcQ (564 aa).

The next 2 helical transmembrane spans lie at 20–40 (LGPG…STLL) and 360–380 (IALT…WYVI). The GGDEF domain maps to 428–563 (HPFSVIQVDL…GRNRVFASDN (136 aa)). Mg(2+) is bound at residue Asp436. Residues Asn444, His449, and Asp453 each coordinate substrate. A Mg(2+)-binding site is contributed by Glu479. Catalysis depends on Glu479, which acts as the Proton acceptor.

Homodimer. Mg(2+) is required as a cofactor.

It is found in the cell inner membrane. It catalyses the reaction 2 GTP = 3',3'-c-di-GMP + 2 diphosphate. Its pathway is glycan metabolism; bacterial cellulose biosynthesis. It functions in the pathway purine metabolism; 3',5'-cyclic di-GMP biosynthesis. Its function is as follows. Catalyzes the synthesis of cyclic-di-GMP (c-di-GMP) via the condensation of 2 GTP molecules. Cyclic-di-GMP is a second messenger which controls cell surface-associated traits in bacteria. Involved in the regulation of cellulose production. The polypeptide is Probable diguanylate cyclase DgcQ (Escherichia coli (strain K12)).